The following is a 482-amino-acid chain: Cytochrome c-552 (482 aa).

A signal peptide spans 1–26 (MIKVSNALQRILIGAALALFGGGAQA). Residue histidine 98 coordinates heme c. Residues cysteine 126, cysteine 129, and lysine 130 each contribute to the heme site. The heme c site is built by cysteine 164, cysteine 167, histidine 168, cysteine 213, cysteine 216, and histidine 217. Residues glutamate 219, tyrosine 220, lysine 265, and glutamine 267 each contribute to the Ca(2+) site. Tyrosine 220 contacts substrate. Substrate is bound at residue histidine 268. Residues histidine 279, cysteine 286, cysteine 289, histidine 290, histidine 305, cysteine 318, cysteine 321, histidine 322, and histidine 397 each coordinate heme c.

This sequence belongs to the cytochrome c-552 family. The cofactor is Ca(2+). Requires heme c as cofactor.

The protein localises to the periplasm. The catalysed reaction is 6 Fe(III)-[cytochrome c] + NH4(+) + 2 H2O = 6 Fe(II)-[cytochrome c] + nitrite + 8 H(+). Its pathway is nitrogen metabolism; nitrate reduction (assimilation). Catalyzes the reduction of nitrite to ammonia, consuming six electrons in the process. The polypeptide is Cytochrome c-552 (Edwardsiella ictaluri (strain 93-146)).